A 183-amino-acid chain; its full sequence is Type II secretion system protein H (183 aa).

The propeptide at 1-8 (MRRHRQSG) is leader sequence. F9 is subject to N-methylphenylalanine. Residues 9–28 (FTLLEVLLVAMLMGLVATAV) traverse the membrane as a helical segment.

This sequence belongs to the GSP H family. In terms of assembly, type II secretion is composed of four main components: the outer membrane complex, the inner membrane complex, the cytoplasmic secretion ATPase and the periplasm-spanning pseudopilus. Interacts with core component ExeG. Post-translationally, cleaved by prepilin peptidase. In terms of processing, methylated by prepilin peptidase at the amino group of the N-terminal phenylalanine once the leader sequence is cleaved by prepilin peptidase.

Its subcellular location is the cell inner membrane. Component of the type II secretion system required for the energy-dependent secretion of extracellular factors such as proteases and toxins from the periplasm. Part of the pseudopilus tip complex that is critical for the recognition and binding of secretion substrates. This Aeromonas hydrophila protein is Type II secretion system protein H (exeH).